Consider the following 802-residue polypeptide: Acetyl-CoA decarbonylase/synthase complex subunit alpha 1 (802 aa).

The [4Fe-4S] cluster site is built by cysteine 68, cysteine 71, cysteine 76, and cysteine 86. Histidine 109 contributes to the CO binding site. [Ni-4Fe-4S] cluster-binding residues include histidine 243, cysteine 271, and cysteine 310. 2 consecutive 4Fe-4S ferredoxin-type domains span residues 395–424 (DEALMEEINKCTQCMNCVFTCPHSLRVDQG) and 435–464 (SKLAQLEEQCLACMKCEQACPKNIKIINVI). Positions 405, 408, 411, 415, 444, 447, 450, and 454 each coordinate [4Fe-4S] cluster. Cysteine 512, cysteine 541, and cysteine 576 together coordinate [Ni-4Fe-4S] cluster.

Belongs to the Ni-containing carbon monoxide dehydrogenase family. Heterotetramer of two alpha and two epsilon subunits. The ACDS complex is made up of alpha, epsilon, beta, gamma and delta subunits with a probable stoichiometry of (alpha(2)epsilon(2))(4)-beta(8)-(gamma(1)delta(1))(8). [4Fe-4S] cluster serves as cofactor. Requires [Ni-4Fe-4S] cluster as cofactor.

It carries out the reaction CO + 2 oxidized [2Fe-2S]-[ferredoxin] + H2O = 2 reduced [2Fe-2S]-[ferredoxin] + CO2 + 2 H(+). In terms of biological role, part of the ACDS complex that catalyzes the reversible cleavage of acetyl-CoA, allowing autotrophic growth from CO(2). The alpha-epsilon subcomponent functions as a carbon monoxide dehydrogenase. The polypeptide is Acetyl-CoA decarbonylase/synthase complex subunit alpha 1 (Archaeoglobus fulgidus (strain ATCC 49558 / DSM 4304 / JCM 9628 / NBRC 100126 / VC-16)).